Reading from the N-terminus, the 66-residue chain is Large ribosomal subunit protein bL35 (66 aa).

Composition is skewed to basic residues over residues 1–15 and 28–45; these read MPKL…KRFK and TKRH…RTRR. Residues 1-49 form a disordered region; that stretch reads MPKLKTKSSAKKRFKVTASGRVMSAQSTKRHGMTKRSKRSLRTRRGIAQ.

The protein belongs to the bacterial ribosomal protein bL35 family.

The chain is Large ribosomal subunit protein bL35 from Anaplasma marginale (strain Florida).